Reading from the N-terminus, the 503-residue chain is Probable cytosol aminopeptidase (503 aa).

Mn(2+)-binding residues include K270 and D275. Residue K282 is part of the active site. Positions 293, 352, and 354 each coordinate Mn(2+). The active site involves R356.

It belongs to the peptidase M17 family. Mn(2+) is required as a cofactor.

The protein resides in the cytoplasm. It catalyses the reaction Release of an N-terminal amino acid, Xaa-|-Yaa-, in which Xaa is preferably Leu, but may be other amino acids including Pro although not Arg or Lys, and Yaa may be Pro. Amino acid amides and methyl esters are also readily hydrolyzed, but rates on arylamides are exceedingly low.. The enzyme catalyses Release of an N-terminal amino acid, preferentially leucine, but not glutamic or aspartic acids.. Presumably involved in the processing and regular turnover of intracellular proteins. Catalyzes the removal of unsubstituted N-terminal amino acids from various peptides. The protein is Probable cytosol aminopeptidase of Shigella boydii serotype 18 (strain CDC 3083-94 / BS512).